The chain runs to 90 residues: DNA-binding protein HU-beta (90 aa).

The protein belongs to the bacterial histone-like protein family. Heterodimer of an alpha and a beta chain.

Histone-like DNA-binding protein which is capable of wrapping DNA to stabilize it, and thus to prevent its denaturation under extreme environmental conditions. The polypeptide is DNA-binding protein HU-beta (hupB) (Escherichia coli O6:H1 (strain CFT073 / ATCC 700928 / UPEC)).